We begin with the raw amino-acid sequence, 263 residues long: Imidazole glycerol phosphate synthase subunit HisF (263 aa).

Catalysis depends on residues D22 and D141.

This sequence belongs to the HisA/HisF family. In terms of assembly, heterodimer of HisH and HisF.

Its subcellular location is the cytoplasm. The catalysed reaction is 5-[(5-phospho-1-deoxy-D-ribulos-1-ylimino)methylamino]-1-(5-phospho-beta-D-ribosyl)imidazole-4-carboxamide + L-glutamine = D-erythro-1-(imidazol-4-yl)glycerol 3-phosphate + 5-amino-1-(5-phospho-beta-D-ribosyl)imidazole-4-carboxamide + L-glutamate + H(+). The protein operates within amino-acid biosynthesis; L-histidine biosynthesis; L-histidine from 5-phospho-alpha-D-ribose 1-diphosphate: step 5/9. Its function is as follows. IGPS catalyzes the conversion of PRFAR and glutamine to IGP, AICAR and glutamate. The HisF subunit catalyzes the cyclization activity that produces IGP and AICAR from PRFAR using the ammonia provided by the HisH subunit. In Clavibacter michiganensis subsp. michiganensis (strain NCPPB 382), this protein is Imidazole glycerol phosphate synthase subunit HisF.